Consider the following 571-residue polypeptide: Chitin-inducible gibberellin-responsive protein 1 (571 aa).

Positions 61-77 (TNTPDNQSSTETISAQP) are enriched in polar residues. 2 disordered regions span residues 61–80 (TNTPDNQSSTETISAQPISP) and 151–180 (QRSRTWSHESRQPLPGVGRSQFASGGYPTA). The GRAS domain maps to 192-571 (ELREDPQIIV…RKLISASAWH (380 aa)). A leucine repeat I (LRI) region spans residues 199 to 259 (IIVKQLLTRC…VARHGNSGTN (61 aa)). A VHIID region spans residues 278 to 343 (MRILYNICPY…GGPPRVRITG (66 aa)). The short motif at 309 to 313 (IHIID) is the VHIID element. Residues 359–391 (IVGKMLKSMSEEFKIPLEFTPLSVYATQVTKEM) are leucine repeat II (LRII). The segment at 400–494 (LSVNFTLQLH…QHCLAKDIVN (95 aa)) is PFYRE. Positions 497–571 (ACEGKDRVER…RKLISASAWH (75 aa)) are SAW.

It belongs to the GRAS family.

It is found in the nucleus. In terms of biological role, may play a regulatory role in the early step of oligosaccharide elicitor response, downstream of the membrane-associated high-affinity chitin-binding protein. This Oryza sativa subsp. japonica (Rice) protein is Chitin-inducible gibberellin-responsive protein 1 (CIGR1).